Here is a 433-residue protein sequence, read N- to C-terminus: Enolase (433 aa).

Residue glutamine 163 participates in (2R)-2-phosphoglycerate binding. Catalysis depends on glutamate 205, which acts as the Proton donor. Mg(2+) contacts are provided by aspartate 242, glutamate 286, and aspartate 313. (2R)-2-phosphoglycerate-binding residues include lysine 338, arginine 367, serine 368, and lysine 389. Catalysis depends on lysine 338, which acts as the Proton acceptor.

It belongs to the enolase family. Requires Mg(2+) as cofactor.

It localises to the cytoplasm. Its subcellular location is the secreted. It is found in the cell surface. It carries out the reaction (2R)-2-phosphoglycerate = phosphoenolpyruvate + H2O. The protein operates within carbohydrate degradation; glycolysis; pyruvate from D-glyceraldehyde 3-phosphate: step 4/5. In terms of biological role, catalyzes the reversible conversion of 2-phosphoglycerate (2-PG) into phosphoenolpyruvate (PEP). It is essential for the degradation of carbohydrates via glycolysis. This Koribacter versatilis (strain Ellin345) protein is Enolase.